Here is a 52-residue protein sequence, read N- to C-terminus: Large ribosomal subunit protein bL32c (52 aa).

It belongs to the bacterial ribosomal protein bL32 family.

The protein resides in the plastid. It is found in the chloroplast. The protein is Large ribosomal subunit protein bL32c of Arabis hirsuta (Hairy rock-cress).